Reading from the N-terminus, the 352-residue chain is UPF0324 membrane protein RA0957 (352 aa).

The next 10 helical transmembrane spans lie at 24-43, 48-67, 104-126, 136-158, 169-191, 201-223, 235-257, 272-294, 301-318, and 328-350; these read VVSY…SAQF, YGAP…NFLS, LGVS…AIIV, LSLL…LNAV, LALT…PVLA, SGVF…FAMS, IVRV…VLGA, GFVL…AAAG, SRWL…KTSV, and HVTL…LLWY.

The protein belongs to the UPF0324 family.

The protein resides in the cell membrane. This chain is UPF0324 membrane protein RA0957, found in Rhizobium meliloti (strain 1021) (Ensifer meliloti).